Consider the following 675-residue polypeptide: DNA gyrase subunit B (675 aa).

The 115-residue stretch at 453–567 (SELYVVEGDS…NGHVFLAQPP (115 aa)) folds into the Toprim domain. The Mg(2+) site is built by Glu459, Asp532, and Asp534.

It belongs to the type II topoisomerase GyrB family. As to quaternary structure, heterotetramer, composed of two GyrA and two GyrB chains. In the heterotetramer, GyrA contains the active site tyrosine that forms a transient covalent intermediate with DNA, while GyrB binds cofactors and catalyzes ATP hydrolysis. It depends on Mg(2+) as a cofactor. The cofactor is Mn(2+). Requires Ca(2+) as cofactor.

The protein resides in the cytoplasm. It catalyses the reaction ATP-dependent breakage, passage and rejoining of double-stranded DNA.. In terms of biological role, a type II topoisomerase that negatively supercoils closed circular double-stranded (ds) DNA in an ATP-dependent manner to modulate DNA topology and maintain chromosomes in an underwound state. Negative supercoiling favors strand separation, and DNA replication, transcription, recombination and repair, all of which involve strand separation. Also able to catalyze the interconversion of other topological isomers of dsDNA rings, including catenanes and knotted rings. Type II topoisomerases break and join 2 DNA strands simultaneously in an ATP-dependent manner. This chain is DNA gyrase subunit B, found in Mycobacterium tuberculosis (strain ATCC 25177 / H37Ra).